Reading from the N-terminus, the 67-residue chain is MARITVEDCLEKIPNRFQLVLAATYRARMLSQGHAAKIESKNKPGVTALREIAEGKIGLEMLKKVPS.

This sequence belongs to the RNA polymerase subunit omega family. The RNAP catalytic core consists of 2 alpha, 1 beta, 1 beta' and 1 omega subunit. When a sigma factor is associated with the core the holoenzyme is formed, which can initiate transcription.

The catalysed reaction is RNA(n) + a ribonucleoside 5'-triphosphate = RNA(n+1) + diphosphate. In terms of biological role, promotes RNA polymerase assembly. Latches the N- and C-terminal regions of the beta' subunit thereby facilitating its interaction with the beta and alpha subunits. The sequence is that of DNA-directed RNA polymerase subunit omega from Polaromonas sp. (strain JS666 / ATCC BAA-500).